The chain runs to 299 residues: Bifunctional protein FolD (299 aa).

NADP(+)-binding positions include glycine 168–serine 170, serine 193, and isoleucine 234.

Belongs to the tetrahydrofolate dehydrogenase/cyclohydrolase family. In terms of assembly, homodimer.

The enzyme catalyses (6R)-5,10-methylene-5,6,7,8-tetrahydrofolate + NADP(+) = (6R)-5,10-methenyltetrahydrofolate + NADPH. The catalysed reaction is (6R)-5,10-methenyltetrahydrofolate + H2O = (6R)-10-formyltetrahydrofolate + H(+). It participates in one-carbon metabolism; tetrahydrofolate interconversion. Catalyzes the oxidation of 5,10-methylenetetrahydrofolate to 5,10-methenyltetrahydrofolate and then the hydrolysis of 5,10-methenyltetrahydrofolate to 10-formyltetrahydrofolate. The sequence is that of Bifunctional protein FolD from Bartonella henselae (strain ATCC 49882 / DSM 28221 / CCUG 30454 / Houston 1) (Rochalimaea henselae).